We begin with the raw amino-acid sequence, 438 residues long: Telomeric repeat-binding factor 1 (438 aa).

Residues 1 to 10 (MAEDVSSTAP) are compositionally biased toward polar residues. A disordered region spans residues 1 to 36 (MAEDVSSTAPSPRGCADGRDADPTEEQMAQTQRNDQ). Ala-2 carries the post-translational modification N-acetylalanine. Ser-11 is subject to Phosphoserine. The tract at residues 58–268 (EEEEEDSGLV…AAAKVVESKR (211 aa)) is TRFH dimerization. A Glycyl lysine isopeptide (Lys-Gly) (interchain with G-Cter in SUMO2) cross-link involves residue Lys-213. Ser-219 carries the phosphoserine; by ATM modification. Positions 265-378 (ESKRTRTITS…PVTPEKHRAR (114 aa)) are interaction with RLIM. A disordered region spans residues 268-311 (RTRTITSQDKPSGNDVEMETEANLDTRKSVSDKQSAVTESSEGT). Residues 299 to 311 (DKQSAVTESSEGT) are compositionally biased toward polar residues. Residue Lys-325 forms a Glycyl lysine isopeptide (Lys-Gly) (interchain with G-Cter in SUMO2) linkage. The disordered stretch occupies residues 326–375 (LQHGTQQQDLNKKERRVGTPQSTKKKKESRRATESRIPVSKSQPVTPEKH). Residues 337 to 356 (KKERRVGTPQSTKKKKESRR) carry the Nuclear localization signal motif. Lys-366 participates in a covalent cross-link: Glycyl lysine isopeptide (Lys-Gly) (interchain with G-Cter in SUMO2). Residues 375-432 (HRARKRQAWLWEEDKNLRSGVRKYGEGNWSKILLHYKFNNRTSVMLKDRWRTMKKLKL) enclose the HTH myb-type domain. Residues 403–428 (WSKILLHYKFNNRTSVMLKDRWRTMK) constitute a DNA-binding region (H-T-H motif).

As to quaternary structure, homodimer; can contain both isoforms. Found in a complex with POT1; TINF2 and TNKS1. Interacts with ATM, TINF2, TNKS1, TNKS2, PINX1, NEK2 and MAPRE1. Component of the shelterin complex (telosome) composed of TERF1, TERF2, TINF2, TERF2IP ACD and POT1. Interacts with RLIM (via N-terminus). Interacts with FBXO4. Interaction with TINF2 protects against interaction with FBXO4 and subsequent polyubiquitination and proteasomal degradation. Interacts with GNL3L; this interaction promotes homodimerization. Interacts with TIN2. Interactions with GNL3L and TIN2 are mutually exclusive. Interacts with RTEL1. Interacts with CCDC79/TERB1. In terms of processing, phosphorylated preferentially on Ser-219 in an ATM-dependent manner in response to ionizing DNA damage. Post-translationally, ADP-ribosylation by TNKS1 or TNKS2 diminishes its ability to bind to telomeric DNA. Ubiquitinated by RLIM/RNF12, leading to its degradation by the proteasome. Ubiquitinated by a SCF (SKP1-CUL1-F-box protein) ubiquitin-protein ligase complex, leading to its degradation by the proteasome.

The protein localises to the nucleus. It localises to the chromosome. It is found in the telomere. The protein resides in the cytoplasm. Its subcellular location is the cytoskeleton. The protein localises to the spindle. Functionally, binds the telomeric double-stranded 5'-TTAGGG-3' repeat and negatively regulates telomere length. Involved in the regulation of the mitotic spindle. Component of the shelterin complex (telosome) that is involved in the regulation of telomere length and protection. Shelterin associates with arrays of double-stranded 5'-TTAGGG-3' repeats added by telomerase and protects chromosome ends; without its protective activity, telomeres are no longer hidden from the DNA damage surveillance and chromosome ends are inappropriately processed by DNA repair pathways. The polypeptide is Telomeric repeat-binding factor 1 (TERF1) (Cricetulus griseus (Chinese hamster)).